Here is a 557-residue protein sequence, read N- to C-terminus: Membrane protein insertase YidC (557 aa).

A helical transmembrane segment spans residues N3 to W23. The tract at residues A34–S60 is disordered. Transmembrane regions (helical) follow at residues V366–Y386, L436–L456, Y480–A500, and P514–V534.

Belongs to the OXA1/ALB3/YidC family. Type 1 subfamily. As to quaternary structure, interacts with the Sec translocase complex via SecD. Specifically interacts with transmembrane segments of nascent integral membrane proteins during membrane integration.

The protein resides in the cell inner membrane. Functionally, required for the insertion and/or proper folding and/or complex formation of integral membrane proteins into the membrane. Involved in integration of membrane proteins that insert both dependently and independently of the Sec translocase complex, as well as at least some lipoproteins. Aids folding of multispanning membrane proteins. The sequence is that of Membrane protein insertase YidC from Thioalkalivibrio sulfidiphilus (strain HL-EbGR7).